Here is a 749-residue protein sequence, read N- to C-terminus: Cytosolic phospholipase A2 (749 aa).

The segment at 1 to 178 is phospholipid binding; it reads MSFIDPYQHI…MKKLLGPKKS (178 aa). A Phosphoserine modification is found at S2. One can recognise a C2 domain in the interval 6-122; that stretch reads PYQHIIVEHQ…KVGEKKEVPF (117 aa). Residues D40, T41, D43, N65, D93, A94, and N95 each coordinate Ca(2+). In terms of domain architecture, PLA2c spans 140 to 740; it reads SCPDLRFSMA…SNVEARRFFN (601 aa). Residue S228 is the Nucleophile of the active site. Phosphothreonine is present on T268. The segment at 427–456 is disordered; it reads KHIVSNDSSDSDDESQEPKGTENEDAERDY. Phosphoserine occurs at positions 434, 435, and 437. S505 carries the phosphoserine; by MAPK modification. S515 is subject to Phosphoserine. A Glycyl lysine isopeptide (Lys-Gly) (interchain with G-Cter in SUMO2) cross-link involves residue K541. The active-site Proton acceptor is the D549. K606 participates in a covalent cross-link: Glycyl lysine isopeptide (Lys-Gly) (interchain with G-Cter in SUMO2). S727 and S729 each carry phosphoserine.

In terms of assembly, interacts with KAT5. Phosphorylated at both Ser-505 and Ser-727 in response to mitogenic stimuli.

It is found in the cytoplasm. Its subcellular location is the golgi apparatus membrane. The protein resides in the nucleus envelope. It carries out the reaction a 1,2-diacyl-sn-glycero-3-phosphocholine + H2O = a 1-acyl-sn-glycero-3-phosphocholine + a fatty acid + H(+). The catalysed reaction is a 1-O-alkyl-2-acyl-sn-glycero-3-phosphocholine + H2O = a 1-O-alkyl-sn-glycero-3-phosphocholine + a fatty acid + H(+). It catalyses the reaction a 1-acyl-sn-glycero-3-phosphocholine + H2O = sn-glycerol 3-phosphocholine + a fatty acid + H(+). The enzyme catalyses 1-hexadecanoyl-2-(5Z,8Z,11Z,14Z-eicosatetraenoyl)-sn-glycero-3-phosphocholine + H2O = 1-hexadecanoyl-sn-glycero-3-phosphocholine + (5Z,8Z,11Z,14Z)-eicosatetraenoate + H(+). It carries out the reaction 1,2-di-(5Z,8Z,11Z,14Z-eicosatetraenoyl)-sn-glycero-3-phosphocholine + H2O = 1-(5Z,8Z,11Z,14Z-eicosatetraenoyl)-sn-glycero-3-phosphocholine + (5Z,8Z,11Z,14Z)-eicosatetraenoate + H(+). The catalysed reaction is 1-octadecanoyl-2-(5Z,8Z,11Z,14Z-eicosatetraenoyl)-sn-glycero-3-phosphocholine + H2O = 1-octadecanoyl-sn-glycero-3-phosphocholine + (5Z,8Z,11Z,14Z)-eicosatetraenoate + H(+). It catalyses the reaction 1-hexadecanoyl-2-(9Z,12Z-octadecadienoyl)-sn-glycero-3-phosphocholine + H2O = (9Z,12Z)-octadecadienoate + 1-hexadecanoyl-sn-glycero-3-phosphocholine + H(+). The enzyme catalyses 1-octadecanoyl-2-(9Z,12Z,15Z-octadecatrienoyl)-sn-glycero-3-phosphocholine + H2O = (9Z,12Z,15Z)-octadecatrienoate + 1-octadecanoyl-sn-glycero-3-phosphocholine + H(+). It carries out the reaction 1-(5Z,8Z,11Z,14Z-eicosatetraenoyl)-2-hexadecanoyl-sn-glycero-3-phosphocholine + H2O = 1-(5Z,8Z,11Z,14Z-eicosatetraenoyl)-sn-glycero-3-phosphocholine + hexadecanoate + H(+). The catalysed reaction is 1-O-hexadecyl-2-(5Z,8Z,11Z,14Z)-eicosatetraenoyl-sn-glycero-3-phosphocholine + H2O = 1-O-hexadecyl-sn-glycero-3-phosphocholine + (5Z,8Z,11Z,14Z)-eicosatetraenoate + H(+). It catalyses the reaction 1,2-di-(9Z-octadecenoyl)-sn-glycero-3-phospho-(1'-sn-glycerol) + H2O = 1-(9Z-octadecenoyl)-sn-glycero-3-phospho-(1'-sn-glycerol) + (9Z)-octadecenoate + H(+). The enzyme catalyses 1-octadecanoyl-2-(5Z,8Z,11Z,14Z-eicosatetraenoyl)-sn-glycero-3-phosphate + H2O = 1-octadecanoyl-sn-glycero-3-phosphate + (5Z,8Z,11Z,14Z)-eicosatetraenoate + H(+). It carries out the reaction 1-hexadecanoyl-sn-glycero-3-phosphocholine + H2O = sn-glycerol 3-phosphocholine + hexadecanoate + H(+). The catalysed reaction is 2-(prostaglandin E2)-sn-glycero-3-phosphoethanolamine + H2O = sn-glycero-3-phosphoethanolamine + prostaglandin E2 + H(+). It catalyses the reaction 2-[(15S)-hydroxy-(5Z,8Z,11Z,13E)-eicosatetraenoyl]-sn-glycero-3-phosphocholine + H2O = (15S)-hydroxy-(5Z,8Z,11Z,13E)-eicosatetraenoate + sn-glycerol 3-phosphocholine + H(+). The enzyme catalyses 2-[(15R)-hydroxy-(5Z,8Z,11Z,13E)-eicosatetraenoyl]-sn-glycero-3-phosphocholine + H2O = (15R)-hydroxy-(5Z,8Z,11Z,13E)-eicosatetraenoate + sn-glycerol 3-phosphocholine + H(+). It carries out the reaction 2-(prostaglandin E2)-sn-glycero-3-phosphocholine + H2O = prostaglandin E2 + sn-glycerol 3-phosphocholine + H(+). The catalysed reaction is 2-[(11R)-hydroxy-(5Z,8Z,12E,14Z)-eicosatetraenoyl]-sn-glycero-3-phosphocholine + H2O = (11R)-hydroxy-(5Z,8Z,12E,14Z)-eicosatetraenoate + sn-glycerol 3-phosphocholine + H(+). It catalyses the reaction 1-(5Z,8Z,11Z,14Z-eicosatetraenoyl)-2-O-hexadecyl-sn-glycero-3-phosphocholine + H2O = 2-O-hexadecyl-sn-glycero-3-phosphocholine + (5Z,8Z,11Z,14Z)-eicosatetraenoate + H(+). The enzyme catalyses 1-octadecanoyl-2-(5Z,8Z,11Z,14Z-eicosatetraenoyl)-sn-glycero-3-phosphocholine + glycerol = 1-(5Z,8Z,11Z,14Z-eicosatetraenoyl)-glycerol + 1-octadecanoyl-sn-glycero-3-phosphocholine. It carries out the reaction 1-octadecanoyl-2-(9Z,12Z,15Z-octadecatrienoyl)-sn-glycero-3-phosphocholine + glycerol = 1-(9Z,12Z,15Z-octadecatrienoyl)-glycerol + 1-octadecanoyl-sn-glycero-3-phosphocholine. The protein operates within membrane lipid metabolism; glycerophospholipid metabolism. It functions in the pathway lipid metabolism; arachidonate metabolism. It participates in lipid metabolism; prostaglandin biosynthesis. Its pathway is lipid metabolism; leukotriene B4 biosynthesis. With respect to regulation, activated by cytosolic calcium, which is necessary for binding to membrane lipids. Activated by phosphorylation in response to mitogenic stimuli. Functionally, has primarily calcium-dependent phospholipase and lysophospholipase activities, with a major role in membrane lipid remodeling and biosynthesis of lipid mediators of the inflammatory response. Plays an important role in embryo implantation and parturition through its ability to trigger prostanoid production. Preferentially hydrolyzes the ester bond of the fatty acyl group attached at sn-2 position of phospholipids (phospholipase A2 activity). Selectively hydrolyzes sn-2 arachidonoyl group from membrane phospholipids, providing the precursor for eicosanoid biosynthesis via the cyclooxygenase pathway. In an alternative pathway of eicosanoid biosynthesis, hydrolyzes sn-2 fatty acyl chain of eicosanoid lysophopholipids to release free bioactive eicosanoids. Hydrolyzes the ester bond of the fatty acyl group attached at sn-1 position of phospholipids (phospholipase A1 activity) only if an ether linkage rather than an ester linkage is present at the sn-2 position. This hydrolysis is not stereospecific. Has calcium-independent phospholipase A2 and lysophospholipase activities in the presence of phosphoinositides. Has O-acyltransferase activity. Catalyzes the transfer of fatty acyl chains from phospholipids to a primary hydroxyl group of glycerol (sn-1 or sn-3), potentially contributing to monoacylglycerol synthesis. The protein is Cytosolic phospholipase A2 (PLA2G4A) of Equus caballus (Horse).